The following is an 87-amino-acid chain: Small ribosomal subunit protein bS18 (87 aa).

A compositionally biased stretch (basic and acidic residues) spans 1 to 10 (MAGKSSGDRR). Positions 1–23 (MAGKSSGDRRKPLRGAKGGKNAA) are disordered.

This sequence belongs to the bacterial ribosomal protein bS18 family. In terms of assembly, part of the 30S ribosomal subunit. Forms a tight heterodimer with protein bS6.

Binds as a heterodimer with protein bS6 to the central domain of the 16S rRNA, where it helps stabilize the platform of the 30S subunit. This is Small ribosomal subunit protein bS18 from Clavibacter michiganensis subsp. michiganensis (strain NCPPB 382).